Here is a 363-residue protein sequence, read N- to C-terminus: S-adenosylmethionine:tRNA ribosyltransferase-isomerase (363 aa).

The protein belongs to the QueA family. Monomer.

Its subcellular location is the cytoplasm. The enzyme catalyses 7-aminomethyl-7-carbaguanosine(34) in tRNA + S-adenosyl-L-methionine = epoxyqueuosine(34) in tRNA + adenine + L-methionine + 2 H(+). The protein operates within tRNA modification; tRNA-queuosine biosynthesis. Transfers and isomerizes the ribose moiety from AdoMet to the 7-aminomethyl group of 7-deazaguanine (preQ1-tRNA) to give epoxyqueuosine (oQ-tRNA). This chain is S-adenosylmethionine:tRNA ribosyltransferase-isomerase, found in Haemophilus influenzae (strain ATCC 51907 / DSM 11121 / KW20 / Rd).